The following is a 281-amino-acid chain: Deoxyribonuclease-1 (281 aa).

The first 21 residues, 1–21 (MRSEMLTALLTLAVLLQVAGS), serve as a signal peptide directing secretion. An N-linked (GlcNAc...) asparagine glycan is attached at Asn39. Glu99 is a catalytic residue. The cysteines at positions 122 and 125 are disulfide-linked. His155 is a catalytic residue.

The protein belongs to the DNase I family. It depends on Ca(2+) as a cofactor. The cofactor is Mg(2+). As to expression, equivalent levels in pancreas and parotid gland, low amounts in kidney, liver, small intestine, stomach and thymus.

Its subcellular location is the secreted. It is found in the zymogen granule. The protein resides in the nucleus envelope. The enzyme catalyses Endonucleolytic cleavage to 5'-phosphodinucleotide and 5'-phosphooligonucleotide end-products.. Its function is as follows. Serum endocuclease secreted into body fluids by a wide variety of exocrine and endocrine organs. Expressed by non-hematopoietic tissues and preferentially cleaves protein-free DNA. Among other functions, seems to be involved in cell death by apoptosis. Binds specifically to G-actin and blocks actin polymerization. Preferentially attacks double-stranded DNA and produces oligonucleotides with 5'-phospho and 3'-hydroxy termini. Together with DNASE1L3, plays a key role in degrading neutrophil extracellular traps (NETs). NETs are mainly composed of DNA fibers and are released by neutrophils to bind pathogens during inflammation. Degradation of intravascular NETs by DNASE1 and DNASE1L3 is required to prevent formation of clots that obstruct blood vessels and cause organ damage following inflammation. This is Deoxyribonuclease-1 (DNASE1) from Oryctolagus cuniculus (Rabbit).